The sequence spans 152 residues: Ribosome maturation factor RimP (152 aa).

Belongs to the RimP family.

It localises to the cytoplasm. Functionally, required for maturation of 30S ribosomal subunits. This chain is Ribosome maturation factor RimP, found in Burkholderia orbicola (strain MC0-3).